The primary structure comprises 770 residues: Signal transducer and activator of transcription 3 (770 aa).

Alanine 2 bears the N-acetylalanine mark. 2 positions are modified to N6-acetyllysine: lysine 49 and lysine 87. Residues 150–162 (DVRKRVQDLEQKM) carry the Essential for nuclear import motif. Positions 580–670 (WNEGYIMGFI…DATNILVSPL (91 aa)) constitute an SH2 domain. 3 positions are modified to allysine; alternate: lysine 601, lysine 615, and lysine 631. Lysine 601, lysine 615, and lysine 631 each carry N6-acetyllysine; alternate. Tyrosine 640 bears the Phosphotyrosine; by TYK2 mark. Lysine 685 bears the Allysine; alternate mark. Lysine 685 is subject to N6-acetyllysine; alternate. Position 705 is a phosphotyrosine; by FER and PTK6 (tyrosine 705). An N6-acetyllysine modification is found at lysine 707. Threonine 714 is modified (phosphothreonine). Serine 727 bears the Phosphoserine; by DYRK2, NLK, NEK6, IRAK1, RPS6KA5, ZIPK/DAPK3 and PKC/PRKCE mark.

This sequence belongs to the transcription factor STAT family. As to quaternary structure, forms a homodimer or a heterodimer with a related family member (at least STAT1). Component of a promoter-binding complex composed of STAT3, NFATC3 and NFATC4; complex formation is enhanced by calcineurin. Interacts with IL31RA, NCOA1, PELP1, SIPAR, SOCS7, STATIP1 and TMF1. Interacts with IL23R in presence of IL23. Interacts (via SH2 domain) with NLK. Interacts with ARL2BP; the interaction is enhanced by LIF and JAK1 expression. Interacts with KPNA4 and KPNA5; KPNA4 may be the primary mediator of nuclear import. Interacts with CAV2; the interaction is increased on insulin-induced tyrosine phosphorylation of CAV2 and leads to STAT3 activation. Interacts with ARL2BP; interaction is enhanced with ARL2. Interacts with NEK6. Binds to CDK9 when activated and nuclear. Interacts with BMX. Interacts with ZIPK/DAPK3. Interacts with PIAS3; the interaction occurs on stimulation by IL6, CNTF or OSM and inhibits the DNA binding activity of STAT3. In prostate cancer cells, interacts with PRKCE and promotes DNA binding activity of STAT3. Interacts with STMN3, antagonizing its microtubule-destabilizing activity. Interacts with the 'Lys-129' acetylated form of BIRC5/survivin. Interacts with FER. Interacts (via SH2 domain) with EIF2AK2/PKR (via the kinase catalytic domain). Interacts with FGFR4. Interacts with INPP5F; the interaction is independent of STAT3 Tyr-705 phosphorylation status. Interacts with OCIAD1. Interacts with OCIAD2. Interacts (unphosphorylated or phosphorylated at Ser-727) with PHB1. Interacts and may form heterodimers with NHLH1. Found in a complex with SLC39A6, SLC39A10 and with the 'Ser-727' phosphorylated form of STAT3 throughout mitosis. Interacts (when acetylated) with EP300 (via bromo domain); interaction takes place following STAT3 acetylation by EP300 and promotes enhanceosome assembly. Interacts (when acetylated) with BRD2 (via bromo domain); interaction promotes STAT3 recruitment to chromatin and T-helper Th17 cell differentiation. Interacts with FAM220A/SIPAR; the interaction occurs in both the nucleus and the cytoplasm, is enhanced by IL6 and promotes STAT3 dephosphorylation. Interacts in both unphosphorylated and phosphorylated forms with FAM220A but interacts preferentially in the phosphorylated form in the nucleus. Interacts with PTPN2; the interaction is promoted by FAM220A and leads to STAT3 dephosphorylation which negatively regulates STAT3 transcriptional activator activity. Activated through tyrosine phosphorylation by BMX. Tyrosine phosphorylated in response to IL6, IL11, CNTF, LIF, KITLG/SCF, CSF1, EGF, PDGF, IFN-alpha, LEP and OSM. Activated KIT promotes phosphorylation on tyrosine residues and subsequent translocation to the nucleus. Tyrosine phosphorylated in response to constitutively activated FGFR1, FGFR2, FGFR3 and FGFR4. Phosphorylated on serine upon DNA damage, probably by ATM or ATR. Serine phosphorylation is important for the formation of stable DNA-binding STAT3 homodimers and maximal transcriptional activity. ARL2BP may participate in keeping the phosphorylated state of STAT3 within the nucleus. Tyrosine phosphorylated upon stimulation with EGF. Upon LPS challenge, phosphorylated within the nucleus by IRAK1. Upon UV-A treatment, phosphorylated on Ser-727 by RPS6KA5. Dephosphorylation on tyrosine residues by PTPN2 negatively regulates IL6/interleukin-6 signaling. Phosphorylation at Tyr-705 by PTK6, isoform M2 of PKM (PKM2) or FER leads to an increase of its transcriptional activity. Phosphorylation at Tyr-705 is increased in the presence of calcineurin. Phosphorylation at Tyr-640 by TYK2 negatively regulates transcriptional activity. Post-translationally, acetylated on lysine residues by EP300/p300, promoting its activation. Acetylation at Lys-49 and Lys-87 by EP300/p300 promotes its activation. Acetylation at Lys-87 by EP300/p300 promotes its association with BRD2 and recruitment to chromatin. Deacetylated at Lys-49 and Lys-87 by HDAC1. Acetylation at Lys-685 by EP300/p300 promotes its homodimerization and activation. Deacetylated at Lys-685 by HDAC3. Acetylated on lysine residues by CREBBP. Deacetylation by LOXL3 leads to disrupt STAT3 dimerization and inhibit STAT3 transcription activity. Oxidation of lysine residues to allysine on STAT3 preferentially takes place on lysine residues that are acetylated. In terms of processing, some lysine residues are oxidized to allysine by LOXL3, leading to disrupt STAT3 dimerization and inhibit STAT3 transcription activity. Oxidation of lysine residues to allysine on STAT3 preferentially takes place on lysine residues that are acetylated. (Microbial infection) Phosphorylated on Tyr-705 in the presence of S.typhimurium SarA. As to expression, expressed in ventricular cardiomyocytes (at protein level). Expressed in the lung (at protein level). Expressed in the liver, spleen and kidney. Expressed in the liver.

Its subcellular location is the cytoplasm. It is found in the nucleus. Its function is as follows. Signal transducer and transcription activator that mediates cellular responses to interleukins, KITLG/SCF, LEP and other growth factors. Once activated, recruits coactivators, such as NCOA1 or MED1, to the promoter region of the target gene. May mediate cellular responses to activated FGFR1, FGFR2, FGFR3 and FGFR4. Upon activation of IL6ST/gp130 signaling by interleukin-6 (IL6), binds to the IL6-responsive elements identified in the promoters of various acute-phase protein genes. Activated by IL31 through IL31RA. Acts as a regulator of inflammatory response by regulating differentiation of naive CD4(+) T-cells into T-helper Th17 or regulatory T-cells (Treg): acetylation promotes its transcription activity and cell differentiation while deacetylation and oxidation of lysine residues by LOXL3 inhibits differentiation. Involved in cell cycle regulation by inducing the expression of key genes for the progression from G1 to S phase, such as CCND1. Mediates the effects of LEP on melanocortin production, body energy homeostasis and lactation. May play an apoptotic role by transctivating BIRC5 expression under LEP activation. Cytoplasmic STAT3 represses macroautophagy by inhibiting EIF2AK2/PKR activity. Plays a crucial role in basal beta cell functions, such as regulation of insulin secretion. Following JAK/STAT signaling activation and as part of a complex with NFATC3 and NFATC4, binds to the alpha-beta E4 promoter region of CRYAB and activates transcription in cardiomyocytes. Plays an important role in host defense in methicillin-resistant S.aureus lung infection by regulating the expression of the antimicrobial lectin REG3G. This chain is Signal transducer and activator of transcription 3, found in Mus musculus (Mouse).